Consider the following 333-residue polypeptide: Glyceraldehyde-3-phosphate dehydrogenase (333 aa).

Position 1 is an N-acetylserine (serine 1). NAD(+) contacts are provided by residues 10 to 11 (RI), aspartate 31, and serine 118. Residues 147 to 149 (SCT), threonine 178, 207 to 208 (TG), and arginine 230 contribute to the D-glyceraldehyde 3-phosphate site. Cysteine 148 serves as the catalytic Nucleophile. Asparagine 312 contacts NAD(+).

It belongs to the glyceraldehyde-3-phosphate dehydrogenase family. Homotetramer.

The protein resides in the cytoplasm. The enzyme catalyses D-glyceraldehyde 3-phosphate + phosphate + NAD(+) = (2R)-3-phospho-glyceroyl phosphate + NADH + H(+). Its pathway is carbohydrate degradation; glycolysis; pyruvate from D-glyceraldehyde 3-phosphate: step 1/5. The protein is Glyceraldehyde-3-phosphate dehydrogenase of Homarus americanus (American lobster).